The following is a 386-amino-acid chain: Cobalt-precorrin-5B C(1)-methyltransferase (386 aa).

This sequence belongs to the CbiD family.

It catalyses the reaction Co-precorrin-5B + S-adenosyl-L-methionine = Co-precorrin-6A + S-adenosyl-L-homocysteine. It functions in the pathway cofactor biosynthesis; adenosylcobalamin biosynthesis; cob(II)yrinate a,c-diamide from sirohydrochlorin (anaerobic route): step 6/10. Its function is as follows. Catalyzes the methylation of C-1 in cobalt-precorrin-5B to form cobalt-precorrin-6A. In Prochlorococcus marinus (strain MIT 9303), this protein is Cobalt-precorrin-5B C(1)-methyltransferase.